A 559-amino-acid polypeptide reads, in one-letter code: 3-phosphoinositide-dependent protein kinase 1 (559 aa).

Phosphotyrosine; by SRC and INSR is present on Tyr-9. Ser-25 is subject to Phosphoserine. Positions 25–83 are disordered; that stretch reads SPSMVRSQTEPGSSPGIPSGVSRQGSTMDGTTAEARPSTNPLQQHPAQLPPQPRKKRPE. Positions 35–44 are enriched in low complexity; sequence PGSSPGIPSG. Over residues 45 to 54 the composition is skewed to polar residues; it reads VSRQGSTMDG. Residues 85 to 345 form the Protein kinase domain; that stretch reads FKFGKILGEG…YGPLKAHPFF (261 aa). Residues 95-97 and Lys-114 contribute to the ATP site; that span reads SFS. A PIF-pocket region spans residues 116–160; the sequence is LEKRHIIKENKVPYVTRERDVMSRLDHPFFVKLYFTFQDDEKLYF. ATP contacts are provided by residues 163–165 and Glu-169; that span reads SYA. Catalysis depends on Asp-208, which acts as the Proton acceptor. 2 residues coordinate ATP: Glu-212 and Asp-226. A Phosphoserine modification is found at Ser-244. Residue Lys-307 is modified to N6-acetyllysine. Thr-357 is modified (phosphothreonine; by MELK). Residues Tyr-376 and Tyr-379 each carry the phosphotyrosine; by SRC and INSR modification. At Ser-396 the chain carries Phosphoserine. Residue Ser-397 is modified to Phosphoserine; by MAP3K5. Ser-399 carries the phosphoserine modification. The residue at position 401 (Ser-401) is a Phosphoserine; by MAP3K5. Phosphoserine is present on Ser-413. The PH domain maps to 462–553; sequence KMGPVDKRKG…EVWRQQYQSN (92 aa). Position 504 is a phosphoserine; by PKC/PRKCQ (Ser-504). Residue Thr-516 is modified to Phosphothreonine; by autocatalysis. Residue Ser-532 is modified to Phosphoserine; by PKC/PRKCQ.

This sequence belongs to the protein kinase superfamily. AGC Ser/Thr protein kinase family. PDPK1 subfamily. Homodimer in its autoinhibited state. Active as monomer. Interacts with NPRL2, PAK1, PTK2B, GRB14, STRAP and IKKB. The Tyr-9 phosphorylated form interacts with SRC, RASA1 and CRK (via their SH2 domains). Interacts with SGK3 in a phosphorylation-dependent manner. The tyrosine-phosphorylated form interacts with PTPN6. The Ser-244 phosphorylated form interacts with YWHAH and YWHAQ. Binds INSR in response to insulin. Interacts (via PH domain) with SMAD3, SMAD4 and SMAD7. Interacts with PKN2; the interaction stimulates PDPK1 autophosphorylation, its PI(3,4,5)P3-dependent kinase activity toward 'Ser-473' of AKT1 but also activates its kinase activity toward PRKCD and PRKCZ. Interacts with PKN1 (via C-terminus) and PPARG. In terms of processing, phosphorylation on Ser-244 in the activation loop is required for full activity. PDPK1 itself can autophosphorylate Ser-244, leading to its own activation. Autophosphorylation is inhibited by the apoptotic C-terminus cleavage product of PKN2. Tyr-9 phosphorylation is critical for stabilization of both PDPK1 and the PDPK1/SRC complex via HSP90-mediated protection of PDPK1 degradation. Angiotensin II stimulates the tyrosine phosphorylation of PDPK1 in vascular smooth muscle in a calcium- and SRC-dependent manner. Phosphorylated on Tyr-9, Tyr-376 and Tyr-379 by INSR in response to insulin. Palmitate negatively regulates autophosphorylation at Ser-244 and palmitate-induced phosphorylation at Ser-532 and Ser-504 by PKC/PRKCQ negatively regulates its ability to phosphorylate PKB/AKT1. Phosphorylation at Thr-357 by MELK partially inhibits kinase activity, the inhibition is cooperatively enhanced by phosphorylation at Ser-397 and Ser-401 by MAP3K5. Post-translationally, monoubiquitinated in the kinase domain, deubiquitinated by USP4. In terms of tissue distribution, highly expressed in heart, brain, liver and testis, also expressed in embryonic cells.

It is found in the cytoplasm. The protein localises to the nucleus. It localises to the cell membrane. The protein resides in the cell junction. Its subcellular location is the focal adhesion. It carries out the reaction L-seryl-[protein] + ATP = O-phospho-L-seryl-[protein] + ADP + H(+). It catalyses the reaction L-threonyl-[protein] + ATP = O-phospho-L-threonyl-[protein] + ADP + H(+). Its activity is regulated as follows. Homodimerization regulates its activity by maintaining the kinase in an autoinhibitory conformation. NPRL2 down-regulates its activity by interfering with tyrosine phosphorylation at the Tyr-9, Tyr-376 and Tyr-379 residues. The 14-3-3 protein YWHAQ acts as a negative regulator by association with the residues surrounding the Ser-244 residue. STRAP positively regulates its activity by enhancing its autophosphorylation and by stimulating its dissociation from YWHAQ. SMAD2, SMAD3, SMAD4 and SMAD7 also positively regulate its activity by stimulating its dissociation from YWHAQ. Activated by phosphorylation on Tyr-9, Tyr-376 and Tyr-379 by INSR in response to insulin. Functionally, serine/threonine kinase which acts as a master kinase, phosphorylating and activating a subgroup of the AGC family of protein kinases. Its targets include: protein kinase B (PKB/AKT1, PKB/AKT2, PKB/AKT3), p70 ribosomal protein S6 kinase (RPS6KB1), p90 ribosomal protein S6 kinase (RPS6KA1, RPS6KA2 and RPS6KA3), cyclic AMP-dependent protein kinase (PRKACA), protein kinase C (PRKCD and PRKCZ), serum and glucocorticoid-inducible kinase (SGK1, SGK2 and SGK3), p21-activated kinase-1 (PAK1), TSSK3, protein kinase PKN (PKN1 and PKN2). Plays a central role in the transduction of signals from insulin by providing the activating phosphorylation to PKB/AKT1, thus propagating the signal to downstream targets controlling cell proliferation and survival, as well as glucose and amino acid uptake and storage. Negatively regulates the TGF-beta-induced signaling by: modulating the association of SMAD3 and SMAD7 with TGF-beta receptor, phosphorylating SMAD2, SMAD3, SMAD4 and SMAD7, preventing the nuclear translocation of SMAD3 and SMAD4 and the translocation of SMAD7 from the nucleus to the cytoplasm in response to TGF-beta. Activates PPARG transcriptional activity and promotes adipocyte differentiation. Activates the NF-kappa-B pathway via phosphorylation of IKKB. The tyrosine phosphorylated form is crucial for the regulation of focal adhesions by angiotensin II. Controls proliferation, survival, and growth of developing pancreatic cells. Participates in the regulation of Ca(2+) entry and Ca(2+)-activated K(+) channels of mast cells. Essential for the motility of vascular endothelial cells (ECs) and is involved in the regulation of their chemotaxis. Plays a critical role in cardiac homeostasis by serving as a dual effector for cell survival and beta-adrenergic response. Plays an important role during thymocyte development by regulating the expression of key nutrient receptors on the surface of pre-T cells and mediating Notch-induced cell growth and proliferative responses. Provides negative feedback inhibition to toll-like receptor-mediated NF-kappa-B activation in macrophages. This is 3-phosphoinositide-dependent protein kinase 1 (Pdpk1) from Mus musculus (Mouse).